Here is an 859-residue protein sequence, read N- to C-terminus: Bifunctional levopimaradiene synthase, chloroplastic (859 aa).

The transit peptide at 1-70 (MALLSSSLSS…IACVGEDSLS (70 aa)) directs the protein to the chloroplast. Lysine 259 provides a ligand contact to substrate. Mg(2+)-binding residues include aspartate 392 and aspartate 394. Residues 392–395 (DIDD) carry the DXDD motif motif. Lysine 479 provides a ligand contact to substrate. Mg(2+) is bound by residues aspartate 611, aspartate 615, asparagine 755, threonine 759, and glutamate 763. The DDXXD motif signature appears at 611–615 (DDLYD).

Belongs to the terpene synthase family. Tpsd subfamily. Requires Mg(2+) as cofactor.

The protein resides in the plastid. It localises to the chloroplast. It catalyses the reaction (2E,6E,10E)-geranylgeranyl diphosphate = (+)-copalyl diphosphate. The enzyme catalyses (+)-copalyl diphosphate = abieta-8(14),12-diene + diphosphate. It participates in terpene metabolism; oleoresin biosynthesis. In terms of biological role, involved in defensive oleoresin formation in conifers in response to insect attack or other injury. Involved in diterpene (C20) olefins biosynthesis. Bifunctional enzyme that catalyzes two sequential cyclizations of geranylgeranyl diphosphate (GGPP) to levopimaradiene. Levopimaradiene is the major products of the enzyme followed by abietadiene, neoabietadiene and palustradiene. The polypeptide is Bifunctional levopimaradiene synthase, chloroplastic (TPS-LAS) (Picea abies (Norway spruce)).